Consider the following 161-residue polypeptide: uncharacterized protein (161 aa).

This is an uncharacterized protein from Rickettsia conorii (strain ATCC VR-613 / Malish 7).